Here is a 382-residue protein sequence, read N- to C-terminus: MCNKNNTFEKNLDISHKPEPLILFNKDNNIWNSKYFRIPNIQLLNDGTILTFSDIRYNGPDDHAYIDIASARSTDFGKTWSYNIAMKNNRIDSTYSRVMDSTTVITNTGRIILIAGSWNTNGNWAMTTSTRRSDWSVQMIYSDDNGLTWSNKIDLTKDSSKVKNQPSNTIGWLGGVGSGIVMDDGTIVMPAQISLRENNENNYYSLIIYSKDNGETWTMGNKVPNSNTSENMVIELDGALIMSTRYDYSGYRAAYISHDLGTTWEIYEPLNGKILTGKGSGCQGSFIKATTSNGHRIGLISAPKNTKGEYIRDNIAVYMIDFDDLSKGVQEICIPYPEDGNKLGGGYSCLSFKNNHLGIVYEANGNIEYQDLTPYYSLINKQ.

Residue Arg-37 coordinates substrate. Asp-62 (proton acceptor) is an active-site residue. BNR repeat units follow at residues 71–82, 140–151, and 208–219; these read ARSTDFGKTWSY, IYSDDNGLTWSN, and IYSKDNGETWTM. Position 245 (Arg-245) interacts with substrate. The BNR 4 repeat unit spans residues 255–266; sequence YISHDLGTTWEI. Tyr-347 (nucleophile) is an active-site residue.

This sequence belongs to the glycosyl hydrolase 33 family.

The protein resides in the secreted. It carries out the reaction Hydrolysis of alpha-(2-&gt;3)-, alpha-(2-&gt;6)-, alpha-(2-&gt;8)- glycosidic linkages of terminal sialic acid residues in oligosaccharides, glycoproteins, glycolipids, colominic acid and synthetic substrates.. Its function is as follows. Sialidases have been suggested to be pathogenic factors in microbial infections. This Clostridium perfringens protein is Sialidase (nanH).